The primary structure comprises 352 residues: Selenide, water dikinase (352 aa).

Cys-23 is an active-site residue. ATP-binding positions include Lys-26 and 54–56 (SRD). Asp-57 contacts Mg(2+). Residues Asp-74, Asp-97, and 145–147 (GHS) each bind ATP. Asp-97 lines the Mg(2+) pocket. Asp-233 provides a ligand contact to Mg(2+).

This sequence belongs to the selenophosphate synthase 1 family. Class I subfamily. In terms of assembly, homodimer. Mg(2+) serves as cofactor.

It carries out the reaction hydrogenselenide + ATP + H2O = selenophosphate + AMP + phosphate + 2 H(+). Its function is as follows. Synthesizes selenophosphate from selenide and ATP. The protein is Selenide, water dikinase of Shewanella sp. (strain MR-4).